A 91-amino-acid chain; its full sequence is Cell division protein ZapA (91 aa).

The stretch at 58–91 (LTAVNIASEYLKLKEEYNRLREQLKKEKDGERDD) forms a coiled coil.

This sequence belongs to the ZapA family. Type 2 subfamily. As to quaternary structure, homodimer. Interacts with FtsZ.

The protein localises to the cytoplasm. Functionally, activator of cell division through the inhibition of FtsZ GTPase activity, therefore promoting FtsZ assembly into bundles of protofilaments necessary for the formation of the division Z ring. It is recruited early at mid-cell but it is not essential for cell division. This chain is Cell division protein ZapA, found in Geobacillus kaustophilus (strain HTA426).